The primary structure comprises 314 residues: Protoheme IX farnesyltransferase (314 aa).

The next 8 membrane-spanning stretches (helical) occupy residues Val31 to His51, Pro52 to Leu72, Ile119 to Ile139, Ile152 to Gly172, Leu179 to Phe199, Ile225 to Phe245, Ala247 to Val267, and Phe284 to Phe304.

This sequence belongs to the UbiA prenyltransferase family. Protoheme IX farnesyltransferase subfamily.

The protein localises to the cell inner membrane. It carries out the reaction heme b + (2E,6E)-farnesyl diphosphate + H2O = Fe(II)-heme o + diphosphate. It participates in porphyrin-containing compound metabolism; heme O biosynthesis; heme O from protoheme: step 1/1. Functionally, converts heme B (protoheme IX) to heme O by substitution of the vinyl group on carbon 2 of heme B porphyrin ring with a hydroxyethyl farnesyl side group. This Bradyrhizobium diazoefficiens (strain JCM 10833 / BCRC 13528 / IAM 13628 / NBRC 14792 / USDA 110) protein is Protoheme IX farnesyltransferase.